The chain runs to 217 residues: Probable GTP-binding protein EngB (217 aa).

Residues 44–217 (DRIEVCFAGR…TLRTIVATLG (174 aa)) enclose the EngB-type G domain. Residues 52–59 (GRSNVGKS), 79–83 (GRTQE), 97–100 (DLPG), 164–167 (TKAD), and 198–200 (TSS) each bind GTP. Mg(2+) is bound by residues S59 and T81.

Belongs to the TRAFAC class TrmE-Era-EngA-EngB-Septin-like GTPase superfamily. EngB GTPase family. The cofactor is Mg(2+).

Its function is as follows. Necessary for normal cell division and for the maintenance of normal septation. This Cereibacter sphaeroides (strain ATCC 17023 / DSM 158 / JCM 6121 / CCUG 31486 / LMG 2827 / NBRC 12203 / NCIMB 8253 / ATH 2.4.1.) (Rhodobacter sphaeroides) protein is Probable GTP-binding protein EngB.